A 441-amino-acid polypeptide reads, in one-letter code: RUN domain-containing protein 3A (441 aa).

An interaction with RAP2A region spans residues 1–293 (MEASFVQTTM…LQLQLEEAAA (293 aa)). The region spanning 52-184 (DDSSEEFVNF…IDFSFCLKGE (133 aa)) is the RUN domain. A Phosphothreonine modification is found at Thr210. The segment at 211–234 (DEEERHSAESSTSEDNSPEHPYLP) is disordered. Ser227 is modified (phosphoserine). Positions 262-317 (YLEELVRLRESQLKDLEAENRRLQLQLEEAAAQNQREKRELEGVILELQEQLTGLI) form a coiled coil. Over residues 367-379 (PLSAEASLSSDSQ) the composition is skewed to polar residues. The interval 367 to 399 (PLSAEASLSSDSQRLGEGKRDEEPWGPIGKDPT) is disordered. Positions 380–389 (RLGEGKRDEE) are enriched in basic and acidic residues. 2 positions are modified to phosphoserine: Ser411 and Ser414.

It belongs to the RUNDC3 family. Interacts with the GTP-bound form of RAP2A.

May act as an effector of RAP2A in neuronal cells. The sequence is that of RUN domain-containing protein 3A (RUNDC3A) from Bos taurus (Bovine).